Reading from the N-terminus, the 105-residue chain is Met repressor (105 aa).

The protein belongs to the MetJ family. In terms of assembly, homodimer.

It localises to the cytoplasm. Functionally, this regulatory protein, when combined with SAM (S-adenosylmethionine) represses the expression of the methionine regulon and of enzymes involved in SAM synthesis. This chain is Met repressor, found in Hamiltonella defensa subsp. Acyrthosiphon pisum (strain 5AT).